A 155-amino-acid chain; its full sequence is MKFLKNKSYHLLVTLIVLTIFVISGAIFLTFLGFGLYGLSRILIYLHLGDFSYNKGFYDNLIYYGSYIVLGYFTLFSIEHLMDYFKKNLPKNPYFQGINFHLISYIVTTIMFYFIVHIHYVHVNIHFWVIMIIIGFLFVCKEVFYPESKNLNNKK.

The next 4 helical transmembrane spans lie at 15–35 (LIVLTIFVISGAIFLTFLGFG), 61–81 (LIYYGSYIVLGYFTLFSIEHL), 98–118 (INFHLISYIVTTIMFYFIVHI), and 120–140 (YVHVNIHFWVIMIIIGFLFVC).

The protein belongs to the multidrug resistance efflux pump SepA family.

It localises to the cell membrane. Functionally, involved in multidrug efflux. This chain is Multidrug resistance efflux pump SepA (sepA), found in Staphylococcus epidermidis (strain ATCC 35984 / DSM 28319 / BCRC 17069 / CCUG 31568 / BM 3577 / RP62A).